A 313-amino-acid polypeptide reads, in one-letter code: Ribosomal RNA small subunit methyltransferase H (313 aa).

Residues 35–37, aspartate 55, phenylalanine 80, aspartate 102, and glutamine 109 each bind S-adenosyl-L-methionine; that span reads GGH.

Belongs to the methyltransferase superfamily. RsmH family.

The protein resides in the cytoplasm. It carries out the reaction cytidine(1402) in 16S rRNA + S-adenosyl-L-methionine = N(4)-methylcytidine(1402) in 16S rRNA + S-adenosyl-L-homocysteine + H(+). Its function is as follows. Specifically methylates the N4 position of cytidine in position 1402 (C1402) of 16S rRNA. The polypeptide is Ribosomal RNA small subunit methyltransferase H (Shewanella denitrificans (strain OS217 / ATCC BAA-1090 / DSM 15013)).